Here is a 59-residue protein sequence, read N- to C-terminus: Sec-independent protein translocase protein TatA (59 aa).

Residues 1–21 traverse the membrane as a helical segment; sequence MFSNIGFPGLILILVAVLILF.

It belongs to the TatA/E family. In terms of assembly, forms a complex with TatC.

It is found in the cell membrane. In terms of biological role, part of the twin-arginine translocation (Tat) system that transports large folded proteins containing a characteristic twin-arginine motif in their signal peptide across membranes. TatA could form the protein-conducting channel of the Tat system. The chain is Sec-independent protein translocase protein TatA from Bacillus mycoides (strain KBAB4) (Bacillus weihenstephanensis).